Reading from the N-terminus, the 327-residue chain is Ribonucleoside-diphosphate reductase small chain (327 aa).

Fe cation is bound by residues Asp70, Glu101, and His104. The active site involves Tyr108. Residues Glu164, Glu198, and His201 each contribute to the Fe cation site.

Belongs to the ribonucleoside diphosphate reductase small chain family. Heterotetramer composed of a homodimer of the large subunit (R1) and a homodimer of the small subunit (R2). Larger multisubunit protein complex are also active, composed of (R1)n(R2)n. The cofactor is Fe cation.

The catalysed reaction is a 2'-deoxyribonucleoside 5'-diphosphate + [thioredoxin]-disulfide + H2O = a ribonucleoside 5'-diphosphate + [thioredoxin]-dithiol. Ribonucleoside-diphosphate reductase holoenzyme provides the precursors necessary for viral DNA synthesis. Allows virus growth in non-dividing cells. Catalyzes the biosynthesis of deoxyribonucleotides from the corresponding ribonucleotides. The sequence is that of Ribonucleoside-diphosphate reductase small chain from African swine fever virus (isolate Tick/Malawi/Lil 20-1/1983) (ASFV).